The following is a 216-amino-acid chain: U1 small nuclear ribonucleoprotein C (216 aa).

Residues 4-36 (FFCDYCDVYLTHDSMSVRKAHNSGRNHLRNVVD) form a Matrin-type zinc finger. Disordered stretches follow at residues 70–89 (PQNQ…PGAG) and 125–216 (PGGI…ADKR). Composition is skewed to pro residues over residues 140–149 (PPMPPFPGMP) and 157–204 (GVPP…PPFG).

Belongs to the U1 small nuclear ribonucleoprotein C family. In terms of assembly, U1 snRNP is composed of the 7 core Sm proteins B/B', D1, D2, D3, E, F and G that assemble in a heptameric protein ring on the Sm site of the small nuclear RNA to form the core snRNP, and at least 3 U1 snRNP-specific proteins U1-70K, U1-A and U1-C. U1-C interacts with U1 snRNA and the 5' splice-site region of the pre-mRNA.

It localises to the nucleus. Its function is as follows. Component of the spliceosomal U1 snRNP, which is essential for recognition of the pre-mRNA 5' splice-site and the subsequent assembly of the spliceosome. U1-C is directly involved in initial 5' splice-site recognition for both constitutive and regulated alternative splicing. The interaction with the 5' splice-site seems to precede base-pairing between the pre-mRNA and the U1 snRNA. Stimulates commitment or early (E) complex formation by stabilizing the base pairing of the 5' end of the U1 snRNA and the 5' splice-site region. In Neurospora crassa (strain ATCC 24698 / 74-OR23-1A / CBS 708.71 / DSM 1257 / FGSC 987), this protein is U1 small nuclear ribonucleoprotein C.